The sequence spans 1390 residues: Nuclear pore complex protein Nup155 (1390 aa).

An O-linked (GlcNAc) serine glycan is attached at Ser525. The tract at residues 598–632 (GSPMYSSSPVPTGSPYPNPSSLGTPSHGAQPPTMS) is disordered. A Glycyl lysine isopeptide (Lys-Gly) (interchain with G-Cter in SUMO2) cross-link involves residue Lys739. A disordered region spans residues 984–1011 (QSKAAPQSPSVPKKPGPPVLSSDPNMLS). At Ser1056 the chain carries Phosphoserine.

The protein belongs to the non-repetitive/WGA-negative nucleoporin family. Interacts with GLE1. Able to form a heterotrimer with GLE1 and NUP42 in vitro. Forms a complex with NUP35, NUP93, NUP205 and lamin B. Phosphorylated. Phosphorylation and dephosphorylation may be important for the function of NUP155 and may play a role in the reversible disassembly of the nuclear pore complex during mitosis. In terms of processing, disulfide-linked to NUP62. The inner channel of the NPC has a different redox environment from the cytoplasm and allows the formation of interchain disulfide bonds between some nucleoporins, the significant increase of these linkages upon oxidative stress reduces the permeability of the NPC.

The protein localises to the nucleus. Its subcellular location is the nuclear pore complex. It is found in the nucleus membrane. Functionally, essential component of nuclear pore complex. Could be essessential for embryogenesis. Nucleoporins may be involved both in binding and translocating proteins during nucleocytoplasmic transport. The sequence is that of Nuclear pore complex protein Nup155 (Nup155) from Rattus norvegicus (Rat).